A 1872-amino-acid polypeptide reads, in one-letter code: Plexin-A3 (1872 aa).

The signal sequence occupies residues 1–19 (MPTVCLLPLLFFTIGGCLG). Residues 20 to 489 (SSRPFRTFVV…SEKQVSQLPV (470 aa)) form the Sema domain. The Extracellular segment spans residues 20 to 1220 (SSRPFRTFVV…ITADRALTLP (1201 aa)). The N-linked (GlcNAc...) asparagine glycan is linked to Asn-60. Intrachain disulfides connect Cys-78–Cys-87, Cys-113–Cys-121, Cys-267–Cys-388, Cys-283–Cys-339, Cys-357–Cys-376, Cys-492–Cys-509, Cys-498–Cys-540, Cys-501–Cys-518, and Cys-512–Cys-524. Asn-549 carries an N-linked (GlcNAc...) asparagine glycan. Cys-575 and Cys-595 are disulfide-bonded. 4 IPT/TIG domains span residues 841–934 (PRIT…YSFV), 936–1021 (PTFD…YTYT), 1024–1123 (PTVT…FTYY), and 1126–1212 (PSFE…LHIT). Asn-1163 is a glycosylation site (N-linked (GlcNAc...) asparagine). The chain crosses the membrane as a helical span at residues 1221 to 1241 (AMVGLAAGGGLLLLAITVVLV). Positions 1240–1294 (LVAYKRKTQDADRTLKRLQLQMDNLESRVALECKEAFAELQTDINELTNHMDGVQ) form a coiled coil. Residues 1242 to 1872 (AYKRKTQDAD…QIITLVSSSS (631 aa)) are Cytoplasmic-facing. A Phosphoserine modification is found at Ser-1597.

It belongs to the plexin family. In terms of tissue distribution, detected in embryonic hindbrain, spinal cord, dorsal root ganglion, trigeminal ganglion and superior cervical ganglion. In newborns, detected throughout all layers of the hippocampus.

The protein localises to the cell membrane. Coreceptor for SEMA3A and SEMA3F. Necessary for signaling by class 3 semaphorins and subsequent remodeling of the cytoskeleton. Plays a role in axon guidance in the developing nervous system. Regulates the migration of sympathetic neurons, but not of neural crest precursors. Required for normal dendrite spine morphology in pyramidal neurons. May play a role in regulating semaphorin-mediated programmed cell death in the developing nervous system. Class 3 semaphorins bind to a complex composed of a neuropilin and a plexin. The plexin modulates the affinity of the complex for specific semaphorins, and its cytoplasmic domain is required for the activation of down-stream signaling events in the cytoplasm. This is Plexin-A3 (Plxna3) from Mus musculus (Mouse).